The sequence spans 1433 residues: Probable ATP-dependent RNA helicase spindle-E (1433 aa).

Residues 76–98 (NRTLDELDSDDEEENMQEQPSVR) are disordered. Positions 81-91 (ELDSDDEEENM) are enriched in acidic residues. Positions 127 to 294 (MKAIRENPVV…FATSSAFPPV (168 aa)) constitute a Helicase ATP-binding domain. 140–147 (GETGCGKT) lines the ATP pocket. The short motif at 240 to 243 (DEVH) is the DEAH box element. Positions 354–526 (QSLQSYEEAK…NSVLKAKELE (173 aa)) constitute a Helicase C-terminal domain. A Tudor domain is found at 937–1000 (ASAVTKGLQL…RLMPHELKRD (64 aa)).

The protein belongs to the DEAD box helicase family. DEAH subfamily.

Its subcellular location is the cytoplasm. It catalyses the reaction ATP + H2O = ADP + phosphate + H(+). Probable ATP-binding RNA helicase which plays a central role during spermatogenesis and oogenesis by repressing transposable elements and preventing their mobilization, which is essential for the germline integrity. Acts via the piRNA metabolic process, which mediates the repression of transposable elements during meiosis by forming complexes composed of piRNAs and Piwi and govern the methylation and subsequent repression of transposons. Involved in the repression of LTR retrotransposon copia. Also involved in telomere regulation by repressing specialized telomeric retroelements HeT-A, TAHRE, and TART; Drosophila telomeres being maintained by transposition of specialized telomeric retroelements. Involved in telomeric trans-silencing, a repression mechanism by which a transposon or a transgene inserted in subtelomeric heterochromatin has the capacity to repress in trans in the female germline, a homologous transposon, or transgene located in euchromatin. Involved in the repression of testis-expressed Stellate genes by the homologous Su(Ste) repeats. Required for anteroposterior and dorsoventral axis formation during oogenesis. The protein is Probable ATP-dependent RNA helicase spindle-E (spn-E) of Drosophila virilis (Fruit fly).